We begin with the raw amino-acid sequence, 255 residues long: RNA polymerase sigma-F factor (255 aa).

Residues 61 to 74 (DLFQIGCIGLLKSV) carry the Polymerase core binding motif. The segment at residues 221-240 (QSEVAERLGISQVQVSRLEK) is a DNA-binding region (H-T-H motif).

This sequence belongs to the sigma-70 factor family. As to quaternary structure, interacts transiently with the RNAP core.

Interaction with SpoIIAB inhibits sigma-F activity throughout the cell before the formation of the asymmetric septum; after septation the interaction is confined to the mother cell, and sigma-F activity is released in the prespore. Fin, a second, forespore-specific anti-sigma factor is induced in 2 successive waves by sigma-F and sigma-G, by antagonizing sigma-F it allows the switch to sigma-G factor and progression to the late sporulation development stages. Its function is as follows. Sigma factors are initiation factors that promote the attachment of RNA polymerase to specific initiation sites and are then released. This sigma factor is responsible for the expression of sporulation specific genes. Interaction with SpoIIAB inhibits sigma-F activity throughout the cell before the formation of the asymmetric septum; after septation the interaction is confined to the mother cell, and sigma F activity is released in the prespore. Responsible for expression of csfB (the anti-sigma-G factor Gin). Associates with the RNAP core only in stationary phase cells. This chain is RNA polymerase sigma-F factor (sigF), found in Bacillus subtilis (strain 168).